Here is a 335-residue protein sequence, read N- to C-terminus: GTPase Obg (335 aa).

The 159-residue stretch at 4 to 162 (GNFVDYTKIY…ADIVLELKVL (159 aa)) folds into the Obg domain. The region spanning 163–332 (ADVGLVGFPN…LKDKLWAMLN (170 aa)) is the OBG-type G domain. Residues 169–176 (GFPNAGKS), 194–198 (FTTLK), 216–219 (DIPG), 283–286 (SKCD), and 313–315 (SSI) each bind GTP. 2 residues coordinate Mg(2+): S176 and T196.

Belongs to the TRAFAC class OBG-HflX-like GTPase superfamily. OBG GTPase family. In terms of assembly, monomer. It depends on Mg(2+) as a cofactor.

Its subcellular location is the cytoplasm. In terms of biological role, an essential GTPase which binds GTP, GDP and possibly (p)ppGpp with moderate affinity, with high nucleotide exchange rates and a fairly low GTP hydrolysis rate. Plays a role in control of the cell cycle, stress response, ribosome biogenesis and in those bacteria that undergo differentiation, in morphogenesis control. This chain is GTPase Obg, found in Flavobacterium psychrophilum (strain ATCC 49511 / DSM 21280 / CIP 103535 / JIP02/86).